Consider the following 143-residue polypeptide: Transcriptional regulator MraZ (143 aa).

SpoVT-AbrB domains follow at residues 5–47 (TFTP…PKAE) and 76–119 (ADEQ…DAES).

It belongs to the MraZ family. In terms of assembly, forms oligomers.

Its subcellular location is the cytoplasm. The protein localises to the nucleoid. The protein is Transcriptional regulator MraZ of Corynebacterium jeikeium (strain K411).